Here is a 525-residue protein sequence, read N- to C-terminus: Probable lipid II flippase MurJ (525 aa).

The next 14 membrane-spanning stretches (helical) occupy residues 10–30, 32–52, 100–120, 140–160, 171–191, 203–223, 247–267, 285–305, 330–350, 368–388, 402–422, 423–443, 455–475, and 495–515; these read LLKS…LGLV, DVVV…FFAN, VLVT…TALF, LASL…FVAL, FAVS…CAWY, LAIG…PFLI, MIPA…DSFV, LLEF…LPAL, FLGI…LMVL, LLAY…APGY, IIAM…YGYV, GLAV…YRGL, TVWF…ALLW, and LTGL…LLGV.

Belongs to the MurJ/MviN family.

Its subcellular location is the cell inner membrane. It participates in cell wall biogenesis; peptidoglycan biosynthesis. Its function is as follows. Involved in peptidoglycan biosynthesis. Transports lipid-linked peptidoglycan precursors from the inner to the outer leaflet of the cytoplasmic membrane. The chain is Probable lipid II flippase MurJ from Vibrio cholerae serotype O1 (strain ATCC 39315 / El Tor Inaba N16961).